We begin with the raw amino-acid sequence, 69 residues long: Protein hunchback (69 aa).

3 C2H2-type zinc fingers span residues 1–11, 17–39, and 45–69; these read KHHLEYHLRNH, FKCE…LKSH, and YRCA…KYSH.

This sequence belongs to the hunchback C2H2-type zinc-finger protein family.

It is found in the nucleus. Its function is as follows. Gap class segmentation protein that controls development of head structures. This chain is Protein hunchback (hb), found in Apis mellifera (Honeybee).